The sequence spans 274 residues: 3',5'-cyclic adenosine monophosphate phosphodiesterase CpdA (274 aa).

Positions 21, 23, 63, 93, 163, 202, and 204 each coordinate Fe cation. Residues H23, D63, and 93 to 94 each bind AMP; that span reads NH. H204 contacts AMP.

The protein belongs to the cyclic nucleotide phosphodiesterase class-III family. Fe(2+) is required as a cofactor.

The enzyme catalyses 3',5'-cyclic AMP + H2O = AMP + H(+). Functionally, hydrolyzes cAMP to 5'-AMP. Plays an important regulatory role in modulating the intracellular concentration of cAMP, thereby influencing cAMP-dependent processes. This is 3',5'-cyclic adenosine monophosphate phosphodiesterase CpdA from Vibrio vulnificus (strain CMCP6).